The following is a 92-amino-acid chain: Secreted RxLR effector protein RXLR-C02 (92 aa).

The first 21 residues, 1-21, serve as a signal peptide directing secretion; it reads MQFHLLVMTTIAASFAATGSA. The RxLR signature appears at 48–51; it reads RALR. A disordered region spans residues 54–75; the sequence is ENRGLIGDDSDSSISDSDSEAK.

This sequence belongs to the RxLR effector family.

It localises to the secreted. The protein resides in the host cytoplasm. The protein localises to the host nucleus. Secreted effector that suppresses pattern-triggered immunity (PTI) in plant host. The protein is Secreted RxLR effector protein RXLR-C02 of Plasmopara halstedii (Downy mildew of sunflower).